We begin with the raw amino-acid sequence, 76 residues long: U-actitoxin-Avd8c (76 aa).

An N-terminal signal peptide occupies residues 1–16 (LVIVFVVLLGVPLISA). Residues 17–33 (NEEELLAILQDQRNDAR) constitute a propeptide that is removed on maturation.

It belongs to the sea anemone 8 toxin family.

Its subcellular location is the secreted. It localises to the nematocyst. The polypeptide is U-actitoxin-Avd8c (Anemonia viridis (Snakelocks anemone)).